The chain runs to 213 residues: Uridine kinase (213 aa).

15–22 (GGSGSGKT) is a binding site for ATP.

This sequence belongs to the uridine kinase family.

The protein resides in the cytoplasm. It carries out the reaction uridine + ATP = UMP + ADP + H(+). It catalyses the reaction cytidine + ATP = CMP + ADP + H(+). The protein operates within pyrimidine metabolism; CTP biosynthesis via salvage pathway; CTP from cytidine: step 1/3. Its pathway is pyrimidine metabolism; UMP biosynthesis via salvage pathway; UMP from uridine: step 1/1. The polypeptide is Uridine kinase (Ligilactobacillus salivarius (strain UCC118) (Lactobacillus salivarius)).